Here is a 701-residue protein sequence, read N- to C-terminus: C6 finger domain transcription factor nscR (701 aa).

The zn(2)-C6 fungal-type DNA-binding region spans Cys-17–Cys-43.

The protein resides in the nucleus. In terms of biological role, transcription factor that specifically regulates the neosartoricin B biosynthesis gene cluster. The polypeptide is C6 finger domain transcription factor nscR (Arthroderma benhamiae (strain ATCC MYA-4681 / CBS 112371) (Trichophyton mentagrophytes)).